The chain runs to 160 residues: Small ribosomal subunit protein uS7 (160 aa).

It belongs to the universal ribosomal protein uS7 family. Part of the 30S ribosomal subunit. Contacts proteins S9 and S11.

Functionally, one of the primary rRNA binding proteins, it binds directly to 16S rRNA where it nucleates assembly of the head domain of the 30S subunit. Is located at the subunit interface close to the decoding center, probably blocks exit of the E-site tRNA. In Rickettsia akari (strain Hartford), this protein is Small ribosomal subunit protein uS7.